A 99-amino-acid polypeptide reads, in one-letter code: Small ribosomal subunit protein uS14c (99 aa).

This sequence belongs to the universal ribosomal protein uS14 family. As to quaternary structure, part of the 30S ribosomal subunit.

It localises to the plastid. Its subcellular location is the chloroplast. Functionally, binds 16S rRNA, required for the assembly of 30S particles. The chain is Small ribosomal subunit protein uS14c from Welwitschia mirabilis (Tree tumbo).